Here is a 240-residue protein sequence, read N- to C-terminus: tRNA1(Val) (adenine(37)-N6)-methyltransferase (240 aa).

Belongs to the methyltransferase superfamily. tRNA (adenine-N(6)-)-methyltransferase family.

The protein resides in the cytoplasm. It carries out the reaction adenosine(37) in tRNA1(Val) + S-adenosyl-L-methionine = N(6)-methyladenosine(37) in tRNA1(Val) + S-adenosyl-L-homocysteine + H(+). In terms of biological role, specifically methylates the adenine in position 37 of tRNA(1)(Val) (anticodon cmo5UAC). The chain is tRNA1(Val) (adenine(37)-N6)-methyltransferase from Christiangramia forsetii (strain DSM 17595 / CGMCC 1.15422 / KT0803) (Gramella forsetii).